The primary structure comprises 255 residues: MSFQDLEAGRGRSLASSRNINGGGSRQDTTQDVASGIFQINTSVSTFHRLVNTLGTPKDTPELREKLHKTRLYIGQLVKDTSAKLKEASETDHQRGVNQKKKIVDAKLAKDFQAVLKEFQKAQRLAAERETVYAPLVHKPSLPSSYTSSEIDVNGDKHPEQRALLVESKRQELVLLDNEIAFNEAVIEEREQGIQEIQQQIGEVHEIFKDLAVLVHDQGNMIDDIGTHIDNSYAATAQGKSHLVRHQRHKDQILL.

Residues 1 to 31 (MSFQDLEAGRGRSLASSRNINGGGSRQDTTQ) form a disordered region. At Ser-2 the chain carries N-acetylserine. Polar residues predominate over residues 14-31 (LASSRNINGGGSRQDTTQ). The t-SNARE coiled-coil homology domain occupies 184–246 (EAVIEEREQG…AQGKSHLVRH (63 aa)).

Belongs to the syntaxin family. Part of the t-SNARE complex. Interacts with RGS1. Expressed at higher levels in leaves, flowers and stems than in roots.

It localises to the membrane. In terms of biological role, may function in the docking or fusion of transport vesicles with the prevacuolar membrane. The polypeptide is Syntaxin-23 (SYP23) (Arabidopsis thaliana (Mouse-ear cress)).